Reading from the N-terminus, the 82-residue chain is Small ribosomal subunit protein uS17 (82 aa).

This sequence belongs to the universal ribosomal protein uS17 family. In terms of assembly, part of the 30S ribosomal subunit.

Its function is as follows. One of the primary rRNA binding proteins, it binds specifically to the 5'-end of 16S ribosomal RNA. This chain is Small ribosomal subunit protein uS17, found in Rhodopseudomonas palustris (strain BisA53).